Here is a 251-residue protein sequence, read N- to C-terminus: MGAPRTCLIFITIQLVSLAYAQEVSKRVPQGFLGMRGKKYFDEEGIEQFYKRKPQFFVGVKGKKSLQDILEAPEEYYKRAPMGFMGMRGKKDLGDSQSTELFPKRDGSLIGKIDYSSKEENADPDFPILNELLLQYLSQLDAPRNTYMQSSESMEPEQSNDLDKRAANFNQFYGVRGKKSINNKRPYDLTFRGKFIGVRGKKDLKNSNAHEIKFLVDQNGPLPKRKAQMGFFGMRGKKWTDEPSLEMDMPN.

The first 21 residues, 1-21 (MGAPRTCLIFITIQLVSLAYA), serve as a signal peptide directing secretion. A propeptide spanning residues 22–25 (QEVS) is cleaved from the precursor. Arg-36 carries the arginine amide modification. A propeptide spanning residues 39 to 50 (KYFDEEGIEQFY) is cleaved from the precursor. Lys-61 is subject to Lysine amide. A propeptide spanning residues 65–163 (SLQDILEAPE…MEPEQSNDLD (99 aa)) is cleaved from the precursor. At Arg-176 the chain carries Arginine amide. Residues 180–183 (SINN) constitute a propeptide that is removed on maturation. Residue Arg-199 is modified to Arginine amide. The propeptide occupies 203–223 (DLKNSNAHEIKFLVDQNGPLP). The residue at position 235 (Arg-235) is an Arginine amide. Positions 239 to 251 (WTDEPSLEMDMPN) are excised as a propeptide.

This sequence belongs to the tachykinin family. Tachykinin-related peptide 1: Expressed in antennal lobe (AL) and gnathal ganglion (GNG) (at protein level). Expression in AL detected in all animals, in GNG in most animals (at protein level). Not expressed in corpora cardiaca (CC) and corpora allata (CA) (at protein level). Tachykinin-related peptide 2: Expressed in antennal lobe (AL) corpora cardiaca (CC) and corpora allata (CA) with expression detected in few animals (at protein level). Not expressed in gnathal ganglion (GNG) (at protein level). Tachykinin-related peptide 4: Expressed in corpora cardiaca (CC), corpora allata (CA), antennal lobe (AL) and gnathal ganglion (GNG) (at protein level). Expression in AL and GNG detected in most animals, in CC and CA detected in few animals (at protein level). Tachykinin-related peptide 5: Expressed in corpora cardiaca (CC), corpora allata (CA), antennal lobe (AL) and gnathal ganglion (GNG) (at protein level). Expression in CC and CA detected in some animals, in AL and GNG in few animals (at protein level). Tachykinin-related peptide 6: Expressed in antennal lobe (AL) and gnathal ganglion (GNG) (at protein level). Expression in AL detected in all animals, in GNG in some animals (at protein level). Not expressed in corpora cardiaca (CC) and corpora allata (CA) (at protein level).

It is found in the secreted. Tachykinins are active peptides which excite neurons, evoke behavioral responses, are potent vasodilators and secretagogues, and contract (directly or indirectly) many smooth muscles. The protein is Tachykinins of Agrotis ipsilon (Black cutworm moth).